The sequence spans 205 residues: uncharacterized protein (205 aa).

Active-site charge relay system residues include Ser119 and His160.

The protein belongs to the peptidase S51 family.

This is an uncharacterized protein from Listeria monocytogenes serovar 1/2a (strain ATCC BAA-679 / EGD-e).